The primary structure comprises 393 residues: Succinate--CoA ligase [ADP-forming] subunit beta (393 aa).

The ATP-grasp domain maps to 9–245 (KMLFAQYGIP…PSQEDKCETY (237 aa)). Residues Lys-46, 53-55 (GRG), Glu-99, Ile-102, and Glu-107 contribute to the ATP site. Positions 200 and 214 each coordinate Mg(2+). Residues Asn-265 and 322-324 (GIV) contribute to the substrate site.

This sequence belongs to the succinate/malate CoA ligase beta subunit family. In terms of assembly, heterotetramer of two alpha and two beta subunits. Mg(2+) serves as cofactor.

It catalyses the reaction succinate + ATP + CoA = succinyl-CoA + ADP + phosphate. It carries out the reaction GTP + succinate + CoA = succinyl-CoA + GDP + phosphate. Its pathway is carbohydrate metabolism; tricarboxylic acid cycle; succinate from succinyl-CoA (ligase route): step 1/1. Functionally, succinyl-CoA synthetase functions in the citric acid cycle (TCA), coupling the hydrolysis of succinyl-CoA to the synthesis of either ATP or GTP and thus represents the only step of substrate-level phosphorylation in the TCA. The beta subunit provides nucleotide specificity of the enzyme and binds the substrate succinate, while the binding sites for coenzyme A and phosphate are found in the alpha subunit. In Baumannia cicadellinicola subsp. Homalodisca coagulata, this protein is Succinate--CoA ligase [ADP-forming] subunit beta.